Consider the following 116-residue polypeptide: Endoribonuclease toxin ChpB (116 aa).

This sequence belongs to the PemK/MazF family. As to quaternary structure, homodimer, interacts with ChpS, which inhibits the endoribonuclease activity.

Stimulated in vitro in a concentration-dependent fashion by extracellular death factor (EDF, a quorum sensing pentapeptide sequence NNWNN, probably produced from the zwf gene product glucose-6-phosphate 1-dehydrogenase), which is able to overcome inhibition by cognate antitoxin ChpS. In terms of biological role, toxic component of a type II toxin-antitoxin (TA) system. ChpB is a sequence-specific mRNA and (weak) tmRNA endoribonuclease that inhibits protein synthesis and induces bacterial stasis. Cleavage is independent of the ribosome. Cleavage occurs at ACY sequences where Y is not C. The endoribonuclease activity is not as strong as that of MazF. The endoribonuclease activity (a toxin) is inhibited by its labile cognate antitoxin ChpS. Toxicity results when the levels of ChpS decrease in the cell, leading to mRNA degradation. Both ChpS and ChpB probably bind to the promoter region of the chpS-chpB operon to autoregulate their synthesis. This chain is Endoribonuclease toxin ChpB (chpB), found in Escherichia coli (strain K12).